The following is a 308-amino-acid chain: Protein translocase subunit SecF (308 aa).

The next 6 helical transmembrane spans lie at 28–48 (SIIL…NFGI), 140–160 (IEAG…YIWV), 164–184 (WYFG…ALGF), 194–214 (LSTI…SVVI), 246–266 (ILTV…GGEA), and 272–292 (ILVF…SAPI).

Belongs to the SecD/SecF family. SecF subfamily. In terms of assembly, forms a complex with SecD. Part of the essential Sec protein translocation apparatus which comprises SecA, SecYEG and auxiliary proteins SecDF-YajC and YidC.

The protein resides in the cell inner membrane. Its function is as follows. Part of the Sec protein translocase complex. Interacts with the SecYEG preprotein conducting channel. SecDF uses the proton motive force (PMF) to complete protein translocation after the ATP-dependent function of SecA. The protein is Protein translocase subunit SecF of Rickettsia rickettsii (strain Sheila Smith).